A 110-amino-acid polypeptide reads, in one-letter code: uncharacterized protein (110 aa).

A run of 3 helical transmembrane segments spans residues 32-52, 57-77, and 90-110; these read VLNVVSIAILFETPHRLALVP, YTHMAIPLSTCLFCLCLCICI, and FLASFFVLILTINDLDVTFVI.

Its subcellular location is the membrane. May play a role in proper chromosome segregation. Suppresses the high-frequency loss of mini-chromosomes when overexpressed, and this suppression is completely dependent on silencing protein SIR4. This is an uncharacterized protein from Saccharomyces cerevisiae (strain ATCC 204508 / S288c) (Baker's yeast).